A 733-amino-acid chain; its full sequence is Sulfate transporter (733 aa).

The span at 1 to 18 shows a compositional bias: basic and acidic residues; the sequence is MSLKNEEQNDLSPKDSVK. A disordered region spans residues 1 to 37; the sequence is MSLKNEEQNDLSPKDSVKGNDQYRAPSGIHLEREEES. 2 positions are modified to phosphoserine: S12 and S16. A run of 2 helical transmembrane segments spans residues 113 to 133 and 138 to 158; these read VMSGLIVGILLVPQSIAYSLL and PIYGLYTSFFASLIYFILGTS. A glycan (N-linked (GlcNAc...) asparagine) is linked at N194. The next 6 helical transmembrane spans lie at 214 to 234, 237 to 257, 379 to 399, 415 to 435, 453 to 473, and 519 to 539; these read IIVGSTVTFVAGVYQVAMGFF, GFVSVYLSDALLGGFVTGASF, IDAIAIAIIGFAITVSLSEMF, AIGFCNIIPSFFHCFTTSAAL, VMTALVLLLVLLVIAPLFFSL, and LISTEIGLLTGVCFSMFCVIL. Residues 563-714 form the STAS domain; sequence AYKNLQAKSG…SVYEAMTFAE (152 aa).

It belongs to the SLC26A/SulP transporter (TC 2.A.53) family. N-glycosylated.

The protein resides in the cell membrane. Its subcellular location is the apical cell membrane. It carries out the reaction oxalate(in) + sulfate(out) = oxalate(out) + sulfate(in). The enzyme catalyses sulfate(out) + 2 chloride(in) = sulfate(in) + 2 chloride(out). It catalyses the reaction oxalate(out) + 2 chloride(in) = oxalate(in) + 2 chloride(out). The catalysed reaction is bromide(in) + chloride(out) = bromide(out) + chloride(in). It carries out the reaction nitrate(in) + chloride(out) = nitrate(out) + chloride(in). The enzyme catalyses iodide(in) + chloride(out) = iodide(out) + chloride(in). Sulfate transporter which mediates sulfate uptake into chondrocytes in order to maintain adequate sulfation of proteoglycans which is needed for cartilage development. Mediates electroneutral anion exchange of sulfate ions for oxalate ions, sulfate and oxalate ions for chloride and/or hydroxyl ions and chloride ions for bromide, iodide and nitrate ions. The coupling of sulfate transport to both hydroxyl and chloride ions likely serves to ensure transport at both acidic pH when most sulfate uptake is mediated by sulfate-hydroxide exchange and alkaline pH when most sulfate uptake is mediated by sulfate-chloride exchange. Essential for chondrocyte proliferation, differentiation and cell size expansion. The chain is Sulfate transporter (SLC26A2) from Bubalus bubalis (Domestic water buffalo).